Here is a 338-residue protein sequence, read N- to C-terminus: tRNA N6-adenosine threonylcarbamoyltransferase (338 aa).

2 residues coordinate Fe cation: H112 and H116. Substrate is bound by residues 135 to 139 (LVSGG), D168, G181, and N273. Residue D301 coordinates Fe cation.

It belongs to the KAE1 / TsaD family. Fe(2+) serves as cofactor.

Its subcellular location is the cytoplasm. It catalyses the reaction L-threonylcarbamoyladenylate + adenosine(37) in tRNA = N(6)-L-threonylcarbamoyladenosine(37) in tRNA + AMP + H(+). Its function is as follows. Required for the formation of a threonylcarbamoyl group on adenosine at position 37 (t(6)A37) in tRNAs that read codons beginning with adenine. Is involved in the transfer of the threonylcarbamoyl moiety of threonylcarbamoyl-AMP (TC-AMP) to the N6 group of A37, together with TsaE and TsaB. TsaD likely plays a direct catalytic role in this reaction. This is tRNA N6-adenosine threonylcarbamoyltransferase from Buchnera aphidicola subsp. Baizongia pistaciae (strain Bp).